The chain runs to 256 residues: 5-keto-4-deoxy-D-glucarate aldolase (256 aa).

The active-site Proton acceptor is the His50. Gln151 is a substrate binding site. Glu153 serves as a coordination point for Mg(2+). Ser178 and Asp179 together coordinate substrate. Asp179 lines the Mg(2+) pocket.

This sequence belongs to the HpcH/HpaI aldolase family. KDGluc aldolase subfamily. In terms of assembly, homohexamer; trimer of dimers. Mg(2+) is required as a cofactor.

The catalysed reaction is 5-dehydro-4-deoxy-D-glucarate = 2-hydroxy-3-oxopropanoate + pyruvate. It catalyses the reaction 2-dehydro-3-deoxy-D-glucarate = 2-hydroxy-3-oxopropanoate + pyruvate. Its pathway is carbohydrate acid metabolism; galactarate degradation; D-glycerate from galactarate: step 2/3. Catalyzes the reversible retro-aldol cleavage of both 5-keto-4-deoxy-D-glucarate and 2-keto-3-deoxy-D-glucarate to pyruvate and tartronic semialdehyde. In Escherichia coli (strain ATCC 8739 / DSM 1576 / NBRC 3972 / NCIMB 8545 / WDCM 00012 / Crooks), this protein is 5-keto-4-deoxy-D-glucarate aldolase.